The chain runs to 331 residues: Meiotically up-regulated gene 172 protein (331 aa).

Positions 72-166 (IKNNEYEKQR…KGNYGLVKAR (95 aa)) form a coiled coil.

Belongs to the ADIP family.

Its subcellular location is the cytoplasm. Functionally, has a role in meiosis. The protein is Meiotically up-regulated gene 172 protein (mug172) of Schizosaccharomyces pombe (strain 972 / ATCC 24843) (Fission yeast).